We begin with the raw amino-acid sequence, 247 residues long: LOB domain-containing protein 38 (247 aa).

Residues 1–107 enclose the LOB domain; it reads MSCNGCRVLR…VETVLRGGSL (107 aa). Residues 157-170 show a composition bias toward low complexity; sequence FSSSRSRSRSTASP. The segment at 157 to 184 is disordered; it reads FSSSRSRSRSTASPPKRKRLSSEQQPSS.

This sequence belongs to the LOB domain-containing protein family. As to expression, expressed in young shoots, roots, stems, leaves and flowers.

The sequence is that of LOB domain-containing protein 38 (LBD38) from Arabidopsis thaliana (Mouse-ear cress).